The primary structure comprises 563 residues: 2-isopropylmalate synthase (563 aa).

Residues 31 to 305 (PIWMSTDLRD…DPGLDFAQIN (275 aa)) enclose the Pyruvate carboxyltransferase domain. Mg(2+) contacts are provided by Asp-40, His-244, His-246, and Asn-280. Residues 437-563 (RAEPIEYLSH…EWARLCGGAE (127 aa)) form a regulatory domain region.

This sequence belongs to the alpha-IPM synthase/homocitrate synthase family. LeuA type 2 subfamily. Homodimer. The cofactor is Mg(2+).

It is found in the cytoplasm. It carries out the reaction 3-methyl-2-oxobutanoate + acetyl-CoA + H2O = (2S)-2-isopropylmalate + CoA + H(+). Its pathway is amino-acid biosynthesis; L-leucine biosynthesis; L-leucine from 3-methyl-2-oxobutanoate: step 1/4. In terms of biological role, catalyzes the condensation of the acetyl group of acetyl-CoA with 3-methyl-2-oxobutanoate (2-ketoisovalerate) to form 3-carboxy-3-hydroxy-4-methylpentanoate (2-isopropylmalate). This is 2-isopropylmalate synthase from Parvibaculum lavamentivorans (strain DS-1 / DSM 13023 / NCIMB 13966).